A 325-amino-acid chain; its full sequence is MADQEFDIDAYFASQSEGKSVVASTPENQHCGFVAIVGRPNVGKSTLLNNLLGQKISITSRKPQTTRHRIMGVETDGNYQAIYVDTPGLHIEEKRAINRLMNRAASSSLSDVNLVLFVVEGTHWTADDEMVFTKLQKANFPVVLCVNKVDQVKDRNEVMLHMLELSKRMQFVDIVPISAKQGKNTDVLKKHVRDHLPKAVHHFPEEYVTDRSQRFMASEIVREKLMRFTGEELPYSVTVEIERFDYNPDTDGFHINALILVERIGQKKMVIGKNGEKIKTIGREARLDMEELFGRKVYLETWVKVKSGWADDERALRSLGYIDDL.

The Era-type G domain maps to 30–198 (HCGFVAIVGR…KKHVRDHLPK (169 aa)). Residues 38–45 (GRPNVGKS) form a G1 region. Residue 38 to 45 (GRPNVGKS) coordinates GTP. The segment at 64-68 (QTTRH) is G2. The segment at 85–88 (DTPG) is G3. Residues 85 to 89 (DTPGL) and 147 to 150 (NKVD) contribute to the GTP site. Positions 147–150 (NKVD) are G4. Residues 177-179 (ISA) are G5. In terms of domain architecture, KH type-2 spans 221–307 (VREKLMRFTG…YLETWVKVKS (87 aa)).

This sequence belongs to the TRAFAC class TrmE-Era-EngA-EngB-Septin-like GTPase superfamily. Era GTPase family. In terms of assembly, monomer.

The protein localises to the cytoplasm. Its subcellular location is the cell inner membrane. Its function is as follows. An essential GTPase that binds both GDP and GTP, with rapid nucleotide exchange. Plays a role in 16S rRNA processing and 30S ribosomal subunit biogenesis and possibly also in cell cycle regulation and energy metabolism. This Vibrio cholerae serotype O1 (strain ATCC 39315 / El Tor Inaba N16961) protein is GTPase Era.